A 503-amino-acid polypeptide reads, in one-letter code: Surface lipoprotein assembly modifier (503 aa).

The signal sequence occupies residues 1–34; the sequence is MTITPVYTTFTPTKTPIKFFMAGLTFLIAHISHA. The interval 38–220 is N-terminal domain; sequence RTDNQEPINQ…QYRQALKQRD (183 aa). One copy of the TPR repeat lies at 136-169; the sequence is ILLGYANALAALDKGNAKKAIDELRRIIAIMPEY. Residues 221–503 are C-terminal probable beta barrel; that stretch reads SWTWQVGMNL…QMFVEFSRIF (283 aa). 14 beta stranded membrane passes run 222-232, 259-270, 275-285, 299-308, 313-322, 334-343, 348-358, 372-382, 387-396, 410-419, 424-434, 454-463, 470-479, and 493-503; these read WTWQVGMNLAK, LSYQLGADKKWS, AYVGANAQIYG, GRLGANLGFA, DLSIETYGEK, IGIRMSVDYR, FQSLNAIDISR, TLYSTSLIYYP, YYLLGADFYD, RGIRTAWGQE, LSSRAQISINK, MQASLSLWHR, ITPRLTISTN, and NQMFVEFSRIF.

The protein belongs to the Slam family.

The protein resides in the cell outer membrane. Required for correct export to the cell surface of some cell outer membrane lipoproteins (tested with TpbP) upon heterologous expression in E.coli and probably also in Moraxella. The protein is Surface lipoprotein assembly modifier of Moraxella catarrhalis (Branhamella catarrhalis).